We begin with the raw amino-acid sequence, 326 residues long: tRNA-modifying protein YgfZ (326 aa).

Folate contacts are provided by Trp-27 and Trp-189.

It belongs to the tRNA-modifying YgfZ family.

It localises to the cytoplasm. Folate-binding protein involved in regulating the level of ATP-DnaA and in the modification of some tRNAs. It is probably a key factor in regulatory networks that act via tRNA modification, such as initiation of chromosomal replication. The sequence is that of tRNA-modifying protein YgfZ from Escherichia fergusonii (strain ATCC 35469 / DSM 13698 / CCUG 18766 / IAM 14443 / JCM 21226 / LMG 7866 / NBRC 102419 / NCTC 12128 / CDC 0568-73).